The primary structure comprises 969 residues: Proprotein convertase subtilisin/kexin type 6 (969 aa).

A compositionally biased stretch (pro residues) spans Met-1–Arg-16. Residues Met-1–Pro-39 form a disordered region. Residues Met-1–Ala-63 form the signal peptide. The segment covering Gly-26–Pro-39 has biased composition (gly residues). Residues Pro-64 to Arg-149 constitute a propeptide that is removed on maturation. Residues Met-168–Val-487 enclose the Peptidase S8 domain. Active-site charge relay system residues include Asp-205 and His-246. Residue Asn-259 is glycosylated (N-linked (GlcNAc...) asparagine). Catalysis depends on Ser-420, which acts as the Charge relay system. The 141-residue stretch at Ala-495–His-635 folds into the P/Homo B domain. Positions Arg-553–Asp-555 match the Cell attachment site motif. The disordered stretch occupies residues Glu-658–Thr-683. FU repeat units follow at residues Thr-692–Gly-739, Ala-743–Ala-790, Gln-794–Phe-838, Leu-842–Pro-887, and His-895–Cys-943. Positions Cys-695–Ile-930 are CRM (Cys-rich motif). N-linked (GlcNAc...) asparagine glycosylation is found at Asn-914 and Asn-932. The PLAC domain occupies Thr-931–Gly-969.

Belongs to the peptidase S8 family. In terms of assembly, the PACE4A-I precursor protein seems to exist in the reticulum endoplasmic as both a monomer and a dimer-sized complex whereas mature PACE4A-I exists only as a monomer, suggesting that propeptide cleavage affects its tertiary or quaternary structure. Interacts (immature form including the propeptide) with RCN3; probably involved in the maturation and the secretion of PCSK6. It depends on Ca(2+) as a cofactor. In terms of tissue distribution, each PACE4 isoform exhibits a unique restricted distribution. Isoform PACE4A-I is expressed in heart, brain, placenta, lung, skeletal muscle, kidney, pancreas, but at comparatively higher levels in the liver. Isoform PACE4A-II is at least expressed in placenta. Isoform PACE4B was only found in the embryonic kidney cell line from which it was isolated. Isoform PACE4C and isoform PACE4D are expressed in placenta. Isoform PACE4E-I is expressed in cerebellum, placenta and pituitary. Isoform PACE4E-II is at least present in cerebellum.

It localises to the secreted. It is found in the endoplasmic reticulum. The protein localises to the endomembrane system. Its function is as follows. Serine endoprotease that processes various proproteins by cleavage at paired basic amino acids, recognizing the RXXX[KR]R consensus motif. Likely functions in the constitutive secretory pathway, with unique restricted distribution in both neuroendocrine and non-neuroendocrine tissues. This Homo sapiens (Human) protein is Proprotein convertase subtilisin/kexin type 6 (PCSK6).